The following is a 261-amino-acid chain: Indole-3-glycerol phosphate synthase (261 aa).

This sequence belongs to the TrpC family.

It catalyses the reaction 1-(2-carboxyphenylamino)-1-deoxy-D-ribulose 5-phosphate + H(+) = (1S,2R)-1-C-(indol-3-yl)glycerol 3-phosphate + CO2 + H2O. It participates in amino-acid biosynthesis; L-tryptophan biosynthesis; L-tryptophan from chorismate: step 4/5. This Burkholderia pseudomallei (strain 1710b) protein is Indole-3-glycerol phosphate synthase.